Reading from the N-terminus, the 392-residue chain is Tryptophan synthase beta chain 1 (392 aa).

K85 is subject to N6-(pyridoxal phosphate)lysine.

The protein belongs to the TrpB family. As to quaternary structure, tetramer of two alpha and two beta chains. Requires pyridoxal 5'-phosphate as cofactor.

It carries out the reaction (1S,2R)-1-C-(indol-3-yl)glycerol 3-phosphate + L-serine = D-glyceraldehyde 3-phosphate + L-tryptophan + H2O. Its pathway is amino-acid biosynthesis; L-tryptophan biosynthesis; L-tryptophan from chorismate: step 5/5. Its function is as follows. The beta subunit is responsible for the synthesis of L-tryptophan from indole and L-serine. The protein is Tryptophan synthase beta chain 1 (trpB1) of Methanothermobacter thermautotrophicus (strain ATCC 29096 / DSM 1053 / JCM 10044 / NBRC 100330 / Delta H) (Methanobacterium thermoautotrophicum).